Consider the following 278-residue polypeptide: HTH-type transcriptional activator RhaS (278 aa).

The 99-residue stretch at 174–272 folds into the HTH araC/xylS-type domain; sequence NQLLAWLEDH…DWSPRDIRQG (99 aa). 2 consecutive DNA-binding regions (H-T-H motif) follow at residues 191 to 212 and 239 to 262; these read ESIA…KQQT and VTDI…RREF.

In terms of assembly, binds DNA as a dimer.

The protein resides in the cytoplasm. In terms of biological role, activates expression of the rhaBAD and rhaT operons. The polypeptide is HTH-type transcriptional activator RhaS (Citrobacter koseri (strain ATCC BAA-895 / CDC 4225-83 / SGSC4696)).